The chain runs to 472 residues: Pyruvate kinase (472 aa).

Arg-33 provides a ligand contact to substrate. K(+) contacts are provided by Asn-35, Ser-37, and Asp-67. 35 to 38 serves as a coordination point for ATP; the sequence is NFSH. 2 residues coordinate ATP: Arg-74 and Lys-155. Glu-220 serves as a coordination point for Mg(2+). Substrate is bound by residues Gly-243, Asp-244, and Thr-276. Residue Asp-244 participates in Mg(2+) binding.

It belongs to the pyruvate kinase family. As to quaternary structure, homotetramer. It depends on Mg(2+) as a cofactor. The cofactor is K(+).

The catalysed reaction is pyruvate + ATP = phosphoenolpyruvate + ADP + H(+). It functions in the pathway carbohydrate degradation; glycolysis; pyruvate from D-glyceraldehyde 3-phosphate: step 5/5. The protein is Pyruvate kinase (pyk) of Mycobacterium tuberculosis (strain CDC 1551 / Oshkosh).